The primary structure comprises 775 residues: 1,4-alpha-glucan branching enzyme GlgB (775 aa).

The active-site Nucleophile is the aspartate 431. The Proton donor role is filled by glutamate 484.

It belongs to the glycosyl hydrolase 13 family. GlgB subfamily. As to quaternary structure, monomer.

The enzyme catalyses Transfers a segment of a (1-&gt;4)-alpha-D-glucan chain to a primary hydroxy group in a similar glucan chain.. The protein operates within glycan biosynthesis; glycogen biosynthesis. In terms of biological role, catalyzes the formation of the alpha-1,6-glucosidic linkages in glycogen by scission of a 1,4-alpha-linked oligosaccharide from growing alpha-1,4-glucan chains and the subsequent attachment of the oligosaccharide to the alpha-1,6 position. This Parasynechococcus marenigrum (strain WH8102) protein is 1,4-alpha-glucan branching enzyme GlgB.